An 85-amino-acid chain; its full sequence is Protein RALF-like 28 (85 aa).

Positions 1 to 31 (MSILKETKRFMVVAMFIACVFISNNMNVAVA) are cleaved as a signal peptide. 2 cysteine pairs are disulfide-bonded: cysteine 48/cysteine 53 and cysteine 66/cysteine 72. The segment at 60–85 (NPYHRGCEKSKRCRGPDPPALPRKMI) is disordered. Over residues 75-85 (PDPPALPRKMI) the composition is skewed to pro residues.

This sequence belongs to the plant rapid alkalinization factor (RALF) family.

It is found in the secreted. In terms of biological role, cell signaling peptide that may regulate plant stress, growth, and development. Mediates a rapid alkalinization of extracellular space by mediating a transient increase in the cytoplasmic Ca(2+) concentration leading to a calcium-dependent signaling events through a cell surface receptor and a concomitant activation of some intracellular mitogen-activated protein kinases. This chain is Protein RALF-like 28 (RALFL28), found in Arabidopsis thaliana (Mouse-ear cress).